Reading from the N-terminus, the 613-residue chain is Carotenoid dioxygenase (613 aa).

A disordered region spans residues 1-25 (MSPHEVIGTVPKNSTTFRTQADEHD). Fe(2+) is bound by residues His-261, His-313, His-383, and His-595.

The protein belongs to the carotenoid oxygenase family. Requires Fe(2+) as cofactor.

It localises to the cytoplasm. The protein resides in the cytosol. It carries out the reaction torulene + O2 = 4'-apo-beta-carotenal + 3-methyl-2-butenal. Its pathway is carotenoid biosynthesis. In terms of biological role, torulene dioxygenase; part of pathway that mediates the biosynthesis of neurosporaxanthin, a carboxylic apocarotenoid acting as an essential protective pigments and leading to orange pigmentation. Cao-2 mediates the cleavage of torulene into beta-apo-4'-carotenal, the aldehyde corresponding to the acidic neurosporaxanthin. Is not able to use gamma-carotene (that it is not desaturated at the C4'-C5' bond) as substrate, which suggests a high specificity of cao-2 in cleaving the C4'-C5' double bond. Neurosporaxanthin is synthesized from geranyl-geranyl pyrophosphate (GGPP) through several enzymatic activities. Phytoene synthase activity performed by the bifunctional enzyme al-2 first produces phytoene from geranyl-geranyl pyrophosphate (GGPP). The phytoene dehydrogenase al-1 then introduces 5 desaturations to lead to 3,4-didehydrolycopene via the intermediates phytofluene, zeta-carotene, neurosporene and lycopene. Al-2 cyclase activity then converts 3,4-didehydrolycopene into torulene. Al-2 can also convet lycopene into gamma-carotene which in turn is converted to beta-carotene by an additional al-2 cyclization reaction. Torulene is the substrate of the dioxidase cao-2 that breaks the molecule, removing five carbon atoms to yield beta-apo-4'-carotenal, whereas the aldehyde dehydrogenase ylo-1 mediates the last step by converting beta-apo-4'-carotenal into neurosporaxanthin. The polypeptide is Carotenoid dioxygenase (Neurospora crassa (strain ATCC 24698 / 74-OR23-1A / CBS 708.71 / DSM 1257 / FGSC 987)).